The chain runs to 378 residues: Alanine racemase (378 aa).

Lysine 35 acts as the Proton acceptor; specific for D-alanine in catalysis. An N6-(pyridoxal phosphate)lysine modification is found at lysine 35. Arginine 133 contacts substrate. Residue tyrosine 266 is the Proton acceptor; specific for L-alanine of the active site. A substrate-binding site is contributed by methionine 314.

It belongs to the alanine racemase family. Pyridoxal 5'-phosphate serves as cofactor.

The enzyme catalyses L-alanine = D-alanine. It participates in amino-acid biosynthesis; D-alanine biosynthesis; D-alanine from L-alanine: step 1/1. Functionally, catalyzes the interconversion of L-alanine and D-alanine. May also act on other amino acids. This Beutenbergia cavernae (strain ATCC BAA-8 / DSM 12333 / CCUG 43141 / JCM 11478 / NBRC 16432 / NCIMB 13614 / HKI 0122) protein is Alanine racemase (alr).